Reading from the N-terminus, the 338-residue chain is Nucleoid-associated protein CGSHiGG_07705 (338 aa).

This sequence belongs to the YejK family.

The protein localises to the cytoplasm. Its subcellular location is the nucleoid. The sequence is that of Nucleoid-associated protein CGSHiGG_07705 from Haemophilus influenzae (strain PittGG).